The chain runs to 544 residues: Serine/threonine-protein kinase PAK 3 (544 aa).

The disordered stretch occupies residues 1 to 73 (MSDSLDNEEK…EKERPEISLP (73 aa)). 2 positions are modified to phosphoserine: serine 2 and serine 4. The span at 18 to 32 (MNSNNRDSSALNHSS) shows a compositional bias: polar residues. Serine 50 is modified (phosphoserine; by autocatalysis). Residues 63 to 73 (KEKERPEISLP) show a composition bias toward basic and acidic residues. Positions 65–108 (KERPEISLPSDFEHTIHVGFDAVTGEFTGIPEQWARLLQTSNIT) are GTPase-binding. The segment at 65–135 (KERPEISLPS…YDSKETVNNQ (71 aa)) is autoregulatory region. Positions 70 to 83 (ISLPSDFEHTIHVG) constitute a CRIB domain. Positions 84–267 (FDAVTGEFTG…IVSVGDPKKK (184 aa)) are linker. A Phosphoserine; by autocatalysis modification is found at serine 139. 2 disordered regions span residues 156–197 (SNTK…RPEH) and 213–248 (PAAPNKEATPPSAENANSSTLYRNTDRQRKKSKMTD). Position 171 is a phosphoserine (serine 171). A compositionally biased stretch (acidic residues) spans 171 to 186 (SEEEDEEEEEEEDDNE). Polar residues predominate over residues 224–235 (SAENANSSTLYR). A Protein kinase domain is found at 268–519 (YTRFEKIGQG…AKELLQHPFL (252 aa)). ATP-binding positions include 274-282 (IGQGASGTV) and lysine 297. Aspartate 387 acts as the Proton acceptor in catalysis. The residue at position 421 (threonine 421) is a Phosphothreonine; by autocatalysis.

It belongs to the protein kinase superfamily. STE Ser/Thr protein kinase family. STE20 subfamily. Interacts tightly with GTP-bound but not GDP-bound CDC42/p21 and RAC1. Shows highly specific binding to the SH3 domains of phospholipase C-gamma and of adapter protein NCK. Interacts with the C-terminal of APP. Interacts with ARHGEF6 and ARHGEF7. Interacts with GIT1 and GIT2. The cofactor is Mg(2+). In terms of processing, autophosphorylated when activated by CDC42/p21. Post-translationally, neddylated. In terms of tissue distribution, detected at high levels in the brain and at low levels in the testis.

It localises to the cytoplasm. It catalyses the reaction L-seryl-[protein] + ATP = O-phospho-L-seryl-[protein] + ADP + H(+). The catalysed reaction is L-threonyl-[protein] + ATP = O-phospho-L-threonyl-[protein] + ADP + H(+). Activated by binding small G proteins. Binding of GTP-bound CDC42 or RAC1 to the autoregulatory region releases monomers from the autoinhibited dimer, enables phosphorylation of Thr-421 and allows the kinase domain to adopt an active structure. Functionally, serine/threonine protein kinase that plays a role in a variety of different signaling pathways including cytoskeleton regulation, cell migration, or cell cycle regulation. Plays a role in dendrite spine morphogenesis as well as synapse formation and plasticity. Acts as a downstream effector of the small GTPases CDC42 and RAC1. Activation by the binding of active CDC42 and RAC1 results in a conformational change and a subsequent autophosphorylation on several serine and/or threonine residues. Phosphorylates MAPK4 and MAPK6 and activates the downstream target MAPKAPK5, a regulator of F-actin polymerization and cell migration. Additionally, phosphorylates TNNI3/troponin I to modulate calcium sensitivity and relaxation kinetics of thin myofilaments. May also be involved in early neuronal development. In hippocampal neurons, necessary for the formation of dendritic spines and excitatory synapses; this function is dependent on kinase activity and may be exerted by the regulation of actomyosin contractility through the phosphorylation of myosin II regulatory light chain (MLC). The sequence is that of Serine/threonine-protein kinase PAK 3 (Pak3) from Rattus norvegicus (Rat).